The chain runs to 1877 residues: MDCIDKSIRRESLRKLGCLPDHGWNLFVQSSNRYSKLLEADSKLFKAQRIEDTVLSICEVTLENKASENALTLFQQLRFYLLNYLFLEDTSEYKSVLCSLDESVYPNLLPLTANICPCILKALLALVRQHRELSSDIVKFLNSIFLALTRILNTPHSSNNNPTHTKTTIFEKVFYASHLGFFFEEIADACISALPQDACLWAMEVCNTILVSDLPCKLIDLHNDSFLHHSNYYAGFGLSYYLYLSSMKAYINSSGCLWYEDATSFWDIVKHRPSSPEEKPFLTQFQSILNLSDKFLSKTGTLRLQEKLGTSCNLFFVLVLKLALLSSSYIGFVPYTYSDWINVLLGSISEDPELLPHLIELMASLACVFPTHFQFAMKRLRLIAIYAPRFDDGNVTYAQLASRKLAQLFNYSSRDTAITSIYQFANLLSPADTPDSYLAAPKERLSISDNMSSSSSQTATVNTISNYLNVIDSVREIALTVNDEKIYGLAISLLIQKFSRKFDSRVSTELVRTLADISTKANDRDFSILVQFYSIQNKMLVKNGDEALTIAICDSRCLIARGTESNSFKRSDLLKSLLEEIIHIGIVRDTPAPELKGYYFGMSKAVQALVECVAGTDWSSLPKEEMYPALFRDMWFTLVINRFRYSVDLGETLEVDLENIAKNSPLLVFEDFGSNFESNLELNTVLRTHIEHSVISQIKSELLVRVPNIDLKPLSTSEICFLSAVLLLESLRCKSNKLSALVEYLLDPSLRDSQLPQSIRAIALYNLTSFVESLSKERRVASSTIDEFQKLLCLCCNRVDCVRQLALECMNYIMETLPHLLGIKEILFSVLELSSLLWKARTEECTDQYVPQLLYKSNKLNLSVILSDIYSCREEVLFQFNRHARSWIQNSSKAIPYQVKNLLESYLADFVDFDDLEVVELGRSLAVELGTRIVSSDRDNFVLPAFGNWTPDTSSEFMAEYTIRQRYSHVDNSILNIEGDMSTDRIDLILNEKSKLFETHLAALKSLEDDILQGNTVSPQRLRNEVRKAAAHAVQEPIFQFSVLARKIVRIPFLDFSPSSFKLGITLWNWMMNQVPSFSSFLISNIIRNWKNEIVTEKRGYFSTAKSKSPLALPMTYSPTERASFLSYKNKVMSQMIPHLLLLQLIAGNFEGFWYGDRQTAKLIVHFMKFVLKKITSMEVNLNVLTRELHFKFVSFGLRIAENLLNSPLGSRFYNLCVDAGLCWFSGMPNWTYGADKLHVAAEISVMRSLRDKLDSFLLRYPLKVSTTLKQKLLIILLNNEMYMLYTWLTPVLHGRNVRMVEPIPDSDAASSPITLEMLQVAWNVSPNIVLYAPKRFQNAPLKQMALNFVIANPFTSVKHEVALEYLFEHYPSGEFPIDRKFILYWEPMYPVSGPVMFMPNVKWNPQLLQYTMRSMESYPVSVTFFYVPQIVQSLRYDSMGYAESFILETSGTSQLFAHQILWNMKANLYKDEAATVPDSIKPILDRVMDKMINSLSGEDKQFYEREFTFFNEVTSISGKLKPFIRKSKPEKKAKIDEEMKKIKLDVGVYLPSNPDGVIVGIDRKSGKPLQSHAKAPFMATFKIRKEKLVDADPEELAVNGTEEEAGDSAKKQTYEVWQSAIFKVGDDCRQDVLTLQLIAMFKNIFNSVGLDVYLFPYRVTATNPGCGVIDVLPNCISRDMLGREAVNGLYDYFRTKFGDEDSIAFQKARSNFVQSMAAYSVITYLLQFKDRHNGNIMIDDQGHILHIDFGFIFDIAPGGITFESAPFKLTTEMIAVMGGSNKSQPFQWFQELCVKAFLACRPYAHYICQAVEVMLDSGLPCFKGQLTITHCLERFALNLNERQASTFMLHLIEQSYANKRTLMYDQFQKATNGIPY.

In terms of domain architecture, PIK helical spans 1305–1491 (PDSDAASSPI…KPILDRVMDK (187 aa)). The pleckstrin homology (PH) domain conferring phosphoinositide binding specificity stretch occupies residues 1492–1625 (MINSLSGEDK…EVWQSAIFKV (134 aa)). A PI3K/PI4K catalytic domain is found at 1593 to 1861 (DPEELAVNGT…LIEQSYANKR (269 aa)). Residues 1599–1605 (VNGTEEE) are G-loop. The interval 1728 to 1736 (QFKDRHNGN) is catalytic loop. Positions 1747 to 1771 (HIDFGFIFDIAPGGITFESAPFKLT) are activation loop.

The protein belongs to the PI3/PI4-kinase family. Type III PI4K subfamily.

The protein localises to the cytoplasm. It carries out the reaction a 1,2-diacyl-sn-glycero-3-phospho-(1D-myo-inositol) + ATP = a 1,2-diacyl-sn-glycero-3-phospho-(1D-myo-inositol 4-phosphate) + ADP + H(+). Acts on phosphatidylinositol (PI) in the first committed step in the production of the second messenger inositol 1,4,5,-trisphosphate. In Schizosaccharomyces pombe (strain 972 / ATCC 24843) (Fission yeast), this protein is Phosphatidylinositol 4-kinase stt4 (stt4).